The chain runs to 919 residues: WD repeat-containing protein 47 (919 aa).

The 33-residue stretch at 10-42 folds into the LisH domain; sequence KEVEIIKLILDFLNSKKLHISMLALEKESGVIN. The CTLH domain maps to 45–102; that stretch reads FSDDMLFLRQLILDGQWDEVLQFIQPLECMEKFDKKRFRYIILKQKFLEALCVNNAMS. Position 285 is a phosphothreonine (T285). A phosphoserine mark is found at S289, S292, S297, and S312. The tract at residues 393 to 421 is disordered; sequence GQSSVSEKEPANGAQNPGPAKQEKNELRD. The residue at position 422 (S422) is a Phosphoserine. Positions 500–590 are disordered; the sequence is LNQQCNGSKG…SLSRSKGEED (91 aa). The span at 517–551 shows a compositional bias: polar residues; the sequence is VTSFTTPPQDSSQRLTHDASNIHTSTPRNPGSTNH. The residue at position 542 (T542) is a Phosphothreonine. 7 WD repeats span residues 604–643, 659–698, 706–748, 753–791, 798–837, 840–879, and 886–918; these read EDTQ…DPSA, HHKG…CNAT, MHDG…GQGL, GHTG…CVRV, GTGS…MVQS, PHSS…TKQL, and EHKD…WTYN.

In terms of assembly, interacts with MAP1S (via WD repeats).

Its subcellular location is the cytoplasm. It is found in the cytoskeleton. In Homo sapiens (Human), this protein is WD repeat-containing protein 47 (WDR47).